We begin with the raw amino-acid sequence, 192 residues long: Early nodulin-like protein 7 (192 aa).

The first 27 residues, 1 to 27, serve as a signal peptide directing secretion; it reads MMMMMMRSTCNLTLMLCICALVVASMA. The Phytocyanin domain occupies 32–134; it reads RDFKVGDEFG…GQRLIVEVMH (103 aa). 3 N-linked (GlcNAc...) asparagine glycosylation sites follow: N48, N89, and N101. An intrachain disulfide couples C88 to C122. The GPI-anchor amidated serine moiety is linked to residue S166. The propeptide at 167-192 is removed in mature form; it reads AASSLPTACLLIPLFLTIASFRFISY.

The protein belongs to the early nodulin-like (ENODL) family. As to expression, mostly expressed in flowers, and, to a lower extent, in seeds, but barely in seedlings, stems, leaves and roots.

It is found in the cell membrane. Its function is as follows. May act as a carbohydrate transporter. This chain is Early nodulin-like protein 7, found in Arabidopsis thaliana (Mouse-ear cress).